We begin with the raw amino-acid sequence, 1007 residues long: Serine/threonine-protein kinase PRP4 homolog (1007 aa).

Residues 1–102 (MAATEPPSLR…LSPAKRTKLD (102 aa)) form a disordered region. The residue at position 2 (Ala-2) is an N-acetylalanine. A phosphoserine mark is found at Ser-8, Ser-21, Ser-24, and Ser-33. Composition is skewed to basic residues over residues 40 to 60 (KHSR…KHKH) and 68 to 82 (KKHK…HKRK). Positions 83–92 (EVIEASDKEG) are enriched in basic and acidic residues. 2 positions are modified to phosphoserine: Ser-88 and Ser-94. Lys-100 carries the post-translational modification N6-acetyllysine; alternate. A Glycyl lysine isopeptide (Lys-Gly) (interchain with G-Cter in SUMO2); alternate cross-link involves residue Lys-100. A Glycyl lysine isopeptide (Lys-Gly) (interchain with G-Cter in SUMO2) cross-link involves residue Lys-112. Residue Lys-118 forms a Glycyl lysine isopeptide (Lys-Gly) (interchain with G-Cter in SUMO2); alternate linkage. Lys-118 is covalently cross-linked (Glycyl lysine isopeptide (Lys-Gly) (interchain with G-Cter in SUMO1); alternate). Phosphoserine is present on Ser-132. Tyr-141 bears the Phosphotyrosine mark. Disordered stretches follow at residues 141-535 (YESG…EDEE) and 560-583 (NISV…SPDD). Ser-143, Ser-145, and Ser-167 each carry phosphoserine. The span at 158-169 (GNRSSTRSSSTR) shows a compositional bias: low complexity. Glycyl lysine isopeptide (Lys-Gly) (interchain with G-Cter in SUMO2) cross-links involve residues Lys-171 and Lys-178. 2 stretches are compositionally biased toward basic residues: residues 180–203 (SAKK…RKSK) and 215–231 (RSKS…SKRS). Phosphoserine is present on residues Ser-240, Ser-242, Ser-258, Ser-278, Ser-292, and Ser-294. Basic and acidic residues predominate over residues 248–271 (RSQEKVGKARSPAEEKMKSEEKGK). The span at 294–303 (SPVDLRDKSK) shows a compositional bias: basic and acidic residues. Over residues 304 to 315 (DRRSRSKERKSK) the composition is skewed to basic residues. Positions 316–325 (RSEIDKEKKP) are enriched in basic and acidic residues. Phosphoserine is present on residues Ser-328, Ser-354, Ser-356, Ser-366, and Ser-368. The segment covering 342–367 (PSRRPGRSPKRRSLSPKLRDKSRRSR) has biased composition (basic residues). Thr-385 carries the phosphothreonine modification. At Ser-387 the chain carries Phosphoserine. Basic and acidic residues-rich tracts occupy residues 395–408 (RSLE…ERRR) and 415–429 (RPRD…RSKD). 3 positions are modified to phosphoserine: Ser-427, Ser-431, and Ser-437. A compositionally biased stretch (basic residues) spans 438–497 (PTRRRSRSPIRRRSRSPLRRSRSPRRRSRSPRRRDRSRRSRSRLRRRSRSRGGHRRRSRS). Phosphoserine occurs at positions 518, 519, 520, 565, 569, 576, 578, and 580. Residues 518-535 (SSSDDNLEDFDVEEEDEE) are compositionally biased toward acidic residues. Over residues 562–581 (SVPSEPSSPQSSTRSRSPSP) the composition is skewed to low complexity. Residues Lys-593 and Lys-659 each participate in a glycyl lysine isopeptide (Lys-Gly) (interchain with G-Cter in SUMO2) cross-link. The region spanning 687 to 1006 (YNVYGYTGQG…ALQHAFIQEK (320 aa)) is the Protein kinase domain. Residues 693–701 (TGQGVFSNV) and Lys-717 contribute to the ATP site. Lys-717 is modified (N6-acetyllysine). The active-site Proton acceptor is Asp-815. Tyr-849 is subject to Phosphotyrosine. Position 852 is a phosphoserine (Ser-852).

The protein belongs to the protein kinase superfamily. CMGC Ser/Thr protein kinase family. As to quaternary structure, interacts with CLK1 C-terminus. Associates with the U5 snRNP and NCOR1 deacetylase complexes. Identified in the spliceosome C complex. In terms of processing, phosphorylated by CLK1. Autophosphorylated; phosphorylation inhibits interaction with its targets, such as PRPF6 or SMARCA4.

The protein resides in the nucleus. Its subcellular location is the chromosome. The protein localises to the centromere. It localises to the kinetochore. The enzyme catalyses L-seryl-[protein] + ATP = O-phospho-L-seryl-[protein] + ADP + H(+). It carries out the reaction L-threonyl-[protein] + ATP = O-phospho-L-threonyl-[protein] + ADP + H(+). Functionally, serine/threonine kinase involved in spliceosomal assembly as well as mitosis and signaling regulation. Connects chromatin mediated regulation of transcription and pre-mRNA splicing. During spliceosomal assembly, interacts with and phosphorylates PRPF6 and PRPF31, components of the U4/U6-U5 tri-small nuclear ribonucleoprotein (snRNP), to facilitate the formation of the spliceosome B complex. Plays a role in regulating transcription and the spindle assembly checkpoint (SAC). Associates with U5 snRNP and NCOR1 deacetylase complexes which may allow a coordination of pre-mRNA splicing with chromatin remodeling events involved in transcriptional regulation. Associates and probably phosphorylates SMARCA4 and NCOR1. Phosphorylates SRSF1. Associates with kinetochores during mitosis and is necessary for recruitment and maintenance of the checkpoint proteins such as MAD1L1 and MAD12L1 at the kinetochores. Phosphorylates and regulates the activity of the transcription factors such as ELK1 and KLF13. Phosphorylates nuclear YAP1 and WWTR1/TAZ which induces nuclear exclusion and regulates Hippo signaling pathway, involved in tissue growth control. This Mus musculus (Mouse) protein is Serine/threonine-protein kinase PRP4 homolog (Prp4k).